A 428-amino-acid polypeptide reads, in one-letter code: Spliceosome RNA helicase DDX39B (428 aa).

The segment covering methionine 1–glutamate 19 has biased composition (acidic residues). Residues methionine 1 to alanine 31 form a disordered region. Alanine 2 is subject to N-acetylalanine. Lysine 36 carries the N6-acetyllysine; alternate modification. A Glycyl lysine isopeptide (Lys-Gly) (interchain with G-Cter in SUMO2); alternate cross-link involves residue lysine 36. Residues serine 38 and serine 41 each carry the phosphoserine modification. Positions serine 45–histidine 73 match the Q motif motif. In terms of domain architecture, Helicase ATP-binding spans isoleucine 76 to isoleucine 249. Alanine 89–threonine 96 is an ATP binding site. Threonine 172 carries the phosphothreonine modification. The DECD box motif lies at aspartate 196–aspartate 199. A Helicase C-terminal domain is found at glycine 261–serine 422.

The protein belongs to the DEAD box helicase family. DECD subfamily. Homodimer, and heterodimer with DDX39A. DDX39B interacts with the THO subcomplex to form the THO-DDX39B complex which multimerizes into a 28-subunit tetrameric assembly. Component of the transcription/export (TREX) complex at least composed of ALYREF/THOC4, DDX39B, SARNP/CIP29, CHTOP and the THO subcomplex; in the complex interacts with THOC2. THOC1-THOC2-THOC3-DDX39B subcomplex is sufficient for the interaction with export factor NXF1-NXT1. TREX seems to have a dynamic structure involving ATP-dependent remodeling. Within the TREX complex bridges ALYREF/THOC4 and the THO subcomplex, and, in a ATP-dependent manner, ALYREF/THOC4 and SARNP/CIP29. Component of the spliceosome. Interacts directly with U2AF2. Interacts with RBM8A, RNPS1 and SRRM1, FYTTD1/UIF, THOC1, MX1 and POLDIP3. Interacts with LUZP4. Interacts with SARNP/CIP29 (via the C-terminal domain); the interaction is direct and facilitates RNA binding of DDX39B.

It is found in the nucleus. The protein resides in the nucleus speckle. The protein localises to the cytoplasm. It carries out the reaction ATP + H2O = ADP + phosphate + H(+). Its function is as follows. Involved in nuclear export of spliced and unspliced mRNA. Component of the TREX complex which is thought to couple mRNA transcription, processing and nuclear export, and specifically associates with spliced mRNA and not with unspliced pre-mRNA. The TREX complex is recruited to spliced mRNAs by a transcription-independent mechanism, binds to mRNA upstream of the exon-junction complex (EJC) and is recruited in a splicing- and cap-dependent manner to a region near the 5' end of the mRNA where it functions in mRNA export to the cytoplasm via the TAP/NXF1 pathway. The THOC1-THOC2-THOC3 core complex alone is sufficient to promote ATPase activity of DDX39B; in the complex THOC2 is the only component that directly interacts with DDX39B. Associates with SARNP/CIP29, which facilitates RNA binding of DDX39B and likely plays a role in mRNA export. May undergo several rounds of ATP hydrolysis during assembly of TREX to drive subsequent loading of components such as ALYREF/THOC4 and CHTOP onto mRNA. Also associates with pre-mRNA independent of ALYREF/THOC4. Involved in the nuclear export of intronless mRNA; the ATP-bound form is proposed to recruit export adapter ALYREF/THOC4 to intronless mRNA; its ATPase activity is cooperatively stimulated by RNA and ALYREF/THOC4 and ATP hydrolysis is thought to trigger the dissociation from RNA to allow the association of ALYREF/THOC4 and the NXF1-NXT1 heterodimer. Involved in transcription elongation and genome stability. In terms of biological role, splice factor that is required for the first ATP-dependent step in spliceosome assembly and for the interaction of U2 snRNP with the branchpoint. Has both RNA-stimulated ATP binding/hydrolysis activity and ATP-dependent RNA unwinding activity. Even with the stimulation of RNA, the ATPase activity is weak. Can only hydrolyze ATP but not other NTPs. The RNA stimulation of ATPase activity does not have a strong preference for the sequence and length of the RNA. However, ssRNA stimulates the ATPase activity much more strongly than dsRNA. Can unwind 5' or 3' overhangs or blunt end RNA duplexes in vitro. The ATPase and helicase activities are not influenced by U2AF2; the effect of ALYREF/THOC4 is reported conflictingly. This Bos taurus (Bovine) protein is Spliceosome RNA helicase DDX39B (DDX39B).